The primary structure comprises 356 residues: Heparan sulfate 2-O-sulfotransferase 1 (356 aa).

Residues 1 to 11 (MGLLRIMMPPK) are Cytoplasmic-facing. The helical; Signal-anchor for type II membrane protein transmembrane segment at 12–28 (LQLLAVVAFAVAMLFLE) threads the bilayer. Positions 24 to 51 (MLFLENQIQKLEESRSKLERAIARHEVR) form a coiled coil. The Lumenal segment spans residues 29-356 (NQIQKLEESR…FYEKIYPKSN (328 aa)). Adenosine 3',5'-bisphosphate is bound by residues lysine 83, threonine 84, alanine 85, serine 86, threonine 87, and serine 88. N-linked (GlcNAc...) asparagine glycans are attached at residues asparagine 108 and asparagine 127. Residues histidine 140 and histidine 142 contribute to the active site. Arginine 164 and serine 172 together coordinate adenosine 3',5'-bisphosphate. 2 cysteine pairs are disulfide-bonded: cysteine 201–cysteine 209 and cysteine 222–cysteine 228. Adenosine 3',5'-bisphosphate-binding residues include tyrosine 279, serine 285, threonine 290, and lysine 293.

It belongs to the sulfotransferase 3 family. Homotrimer. Interacts with the C5-epimerase GLCE. Post-translationally, N-glycosylated.

The protein resides in the golgi apparatus membrane. Catalyzes the transfer of a sulfo group from 3'-phospho-5'-adenylyl sulfate (PAPS) to the 2-OH position of iduronic acid (IdoA) or glucuronic acid (GlcA) within the heparan sulfate (HS) chain and participates in HS biosynthesis. Required for metanephric development of kidney formation, suggesting that 2-O-sulfation within HS is essential for signaling between ureteric bud and metanephric mesenchyme. This chain is Heparan sulfate 2-O-sulfotransferase 1, found in Homo sapiens (Human).